We begin with the raw amino-acid sequence, 89 residues long: MSITAERKSALIKEYATNEGDTGSPEVQVAILTERITNLTEHFKGHKKDNHSRRGLLTLVSTRRSLLDYLKKKDEGRYSKLIASLGIRR.

Belongs to the universal ribosomal protein uS15 family. Part of the 30S ribosomal subunit. Forms a bridge to the 50S subunit in the 70S ribosome, contacting the 23S rRNA.

In terms of biological role, one of the primary rRNA binding proteins, it binds directly to 16S rRNA where it helps nucleate assembly of the platform of the 30S subunit by binding and bridging several RNA helices of the 16S rRNA. Its function is as follows. Forms an intersubunit bridge (bridge B4) with the 23S rRNA of the 50S subunit in the ribosome. This is Small ribosomal subunit protein uS15 from Allorhizobium ampelinum (strain ATCC BAA-846 / DSM 112012 / S4) (Agrobacterium vitis (strain S4)).